The sequence spans 120 residues: Large ribosomal subunit protein uL18 (120 aa).

This sequence belongs to the universal ribosomal protein uL18 family. As to quaternary structure, part of the 50S ribosomal subunit; part of the 5S rRNA/L5/L18/L25 subcomplex. Contacts the 5S and 23S rRNAs.

Functionally, this is one of the proteins that bind and probably mediate the attachment of the 5S RNA into the large ribosomal subunit, where it forms part of the central protuberance. This is Large ribosomal subunit protein uL18 from Bartonella bacilliformis (strain ATCC 35685 / KC583 / Herrer 020/F12,63).